We begin with the raw amino-acid sequence, 571 residues long: Double-stranded RNA-binding protein Staufen homolog 2 (571 aa).

The DRBM 1 domain occupies threonine 8–leucine 75. Proline 9 and valine 13 each carry phosphoserine. Arginine 18 is modified (phosphothreonine). A Phosphoserine modification is found at serine 21. Disordered stretches follow at residues threonine 71 to isoleucine 94 and alanine 178 to aspartate 203. Polar residues predominate over residues proline 83–isoleucine 94. Residues threonine 95–asparagine 181 enclose the DRBM 2 domain. The residue at position 188 (serine 188) is a Phosphoserine. Over residues serine 194–aspartate 203 the composition is skewed to basic and acidic residues. DRBM domains lie at serine 207–lysine 274 and asparagine 307–tyrosine 375. 2 consecutive short sequence motifs (nuclear localization signal) follow at residues lysine 273–glutamine 317 and leucine 373–isoleucine 412. The segment at leucine 381–isoleucine 571 is required for dendritic transport. The tract at residues glutamine 382–leucine 413 is disordered. 6 positions are modified to phosphoserine: serine 395, serine 416, serine 426, serine 440, serine 456, and serine 493. Residues leucine 546–isoleucine 571 are disordered. The segment covering asparagine 552 to glutamine 562 has biased composition (polar residues).

In terms of assembly, identified in a mRNP complex, at least composed of DHX9, DDX3X, ELAVL1, HNRNPU, IGF2BP1, ILF3, PABPC1, PCBP2, PTBP2, STAU1, STAU2, SYNCRIP and YBX1. Interacts with the exportin XPO5. This requires RNA and RAN bound to GTP. Interacts with microtubules. Isoform 2 and isoform 3 may also interact with ribosomes, and this association is independent of translation. Interacts with TRIM71 (via NHL repeats) in an RNA-dependent manner. Expressed in both somata and dendrites of hippocampal neurons.

The protein resides in the nucleus. It is found in the nucleolus. Its subcellular location is the cytoplasm. It localises to the endoplasmic reticulum. Its function is as follows. RNA-binding protein required for the microtubule-dependent transport of neuronal RNA from the cell body to the dendrite. As protein synthesis occurs within the dendrite, the localization of specific mRNAs to dendrites may be a prerequisite for neurite outgrowth and plasticity at sites distant from the cell body. This is Double-stranded RNA-binding protein Staufen homolog 2 (Stau2) from Rattus norvegicus (Rat).